The sequence spans 428 residues: Glutamate-1-semialdehyde 2,1-aminomutase (428 aa).

The residue at position 265 (Lys265) is an N6-(pyridoxal phosphate)lysine.

It belongs to the class-III pyridoxal-phosphate-dependent aminotransferase family. HemL subfamily. As to quaternary structure, homodimer. Pyridoxal 5'-phosphate serves as cofactor.

Its subcellular location is the cytoplasm. The catalysed reaction is (S)-4-amino-5-oxopentanoate = 5-aminolevulinate. Its pathway is porphyrin-containing compound metabolism; protoporphyrin-IX biosynthesis; 5-aminolevulinate from L-glutamyl-tRNA(Glu): step 2/2. This chain is Glutamate-1-semialdehyde 2,1-aminomutase, found in Shewanella sediminis (strain HAW-EB3).